Reading from the N-terminus, the 223-residue chain is 2-C-methyl-D-erythritol 4-phosphate cytidylyltransferase (223 aa).

Belongs to the IspD/TarI cytidylyltransferase family. IspD subfamily.

It catalyses the reaction 2-C-methyl-D-erythritol 4-phosphate + CTP + H(+) = 4-CDP-2-C-methyl-D-erythritol + diphosphate. The protein operates within isoprenoid biosynthesis; isopentenyl diphosphate biosynthesis via DXP pathway; isopentenyl diphosphate from 1-deoxy-D-xylulose 5-phosphate: step 2/6. In terms of biological role, catalyzes the formation of 4-diphosphocytidyl-2-C-methyl-D-erythritol from CTP and 2-C-methyl-D-erythritol 4-phosphate (MEP). In Prochlorococcus marinus (strain MIT 9215), this protein is 2-C-methyl-D-erythritol 4-phosphate cytidylyltransferase.